The primary structure comprises 42 residues: Perlinhibin-related protein (42 aa).

Contains four disulfide bonds.

Inhibitor of shell growth. The sequence is that of Perlinhibin-related protein from Haliotis laevigata (Smooth Australian abalone).